The following is a 510-amino-acid chain: UDP-N-acetylmuramoyl-tripeptide--D-alanyl-D-alanine ligase (510 aa).

Residue 136-142 (GSSGKTS) coordinates ATP.

This sequence belongs to the MurCDEF family. MurF subfamily.

It is found in the cytoplasm. The catalysed reaction is D-alanyl-D-alanine + UDP-N-acetyl-alpha-D-muramoyl-L-alanyl-gamma-D-glutamyl-meso-2,6-diaminopimelate + ATP = UDP-N-acetyl-alpha-D-muramoyl-L-alanyl-gamma-D-glutamyl-meso-2,6-diaminopimeloyl-D-alanyl-D-alanine + ADP + phosphate + H(+). Its pathway is cell wall biogenesis; peptidoglycan biosynthesis. Involved in cell wall formation. Catalyzes the final step in the synthesis of UDP-N-acetylmuramoyl-pentapeptide, the precursor of murein. This Mycobacterium tuberculosis (strain CDC 1551 / Oshkosh) protein is UDP-N-acetylmuramoyl-tripeptide--D-alanyl-D-alanine ligase.